Reading from the N-terminus, the 277-residue chain is Anamorsin homolog (277 aa).

Positions 1–134 (MALQGNVAIL…PFYPEFSDAV (134 aa)) are N-terminal SAM-like domain. The segment at 135-191 (SFTSKKQSFESAAIPLAVKSTTTQPIKKWTVLADDFGDDQDDDIIDEDTLLDDTDEV) is linker. The [2Fe-2S] cluster site is built by C199, C210, C213, and C215. The fe-S binding site A stretch occupies residues 199 to 215 (CGDAVGGKKRACKNCTC). Residues C238, C241, C249, and C252 each contribute to the [4Fe-4S] cluster site. 2 consecutive short sequence motifs (cx2C motif) follow at residues 238-241 (CGNC) and 249-252 (CGSC). The interval 238–252 (CGNCFKGDAFRCGSC) is fe-S binding site B.

The protein belongs to the anamorsin family. In terms of assembly, monomer. It depends on [2Fe-2S] cluster as a cofactor. Requires [4Fe-4S] cluster as cofactor.

Its subcellular location is the cytoplasm. The protein localises to the mitochondrion intermembrane space. Its function is as follows. Component of the cytosolic iron-sulfur (Fe-S) protein assembly (CIA) machinery. Required for the maturation of extramitochondrial Fe-S proteins. Part of an electron transfer chain functioning in an early step of cytosolic Fe-S biogenesis, facilitating the de novo assembly of a [4Fe-4S] cluster on the cytosolic Fe-S scaffold complex. Electrons are transferred from NADPH via a FAD- and FMN-containing diflavin oxidoreductase. Together with the diflavin oxidoreductase, also required for the assembly of the diferric tyrosyl radical cofactor of ribonucleotide reductase (RNR), probably by providing electrons for reduction during radical cofactor maturation in the catalytic small subunit. The sequence is that of Anamorsin homolog from Phytophthora infestans (strain T30-4) (Potato late blight agent).